A 607-amino-acid polypeptide reads, in one-letter code: Chaperone protein dnaK (607 aa).

A compositionally biased stretch (polar residues) spans 579 to 591 (KASETSNAKTNGK). The interval 579–607 (KASETSNAKTNGKASEKEDVIDADFKAQE) is disordered. Basic and acidic residues predominate over residues 592-607 (ASEKEDVIDADFKAQE).

The protein belongs to the heat shock protein 70 family.

The protein resides in the plastid. Its subcellular location is the chloroplast. Acts as a chaperone. The protein is Chaperone protein dnaK of Cyanidioschyzon merolae (strain NIES-3377 / 10D) (Unicellular red alga).